The following is a 109-amino-acid chain: UPF0060 membrane protein mma_0129 (109 aa).

The next 4 membrane-spanning stretches (helical) occupy residues 7 to 27 (VALF…PYLW), 31 to 51 (GASI…VWLL), 63 to 83 (AAYG…VDGI), and 87 to 107 (NWDF…LFAP).

Belongs to the UPF0060 family.

It is found in the cell inner membrane. This chain is UPF0060 membrane protein mma_0129, found in Janthinobacterium sp. (strain Marseille) (Minibacterium massiliensis).